Here is a 504-residue protein sequence, read N- to C-terminus: Outer capsid protein VP5 (504 aa).

The tract at residues 1–42 (MGKFTSFLKRAGSATKNALTSDAAKRMYKMAGKTLQKVVESE) is involved in membrane permeabilization.

It belongs to the orbivirus VP5 family.

Its subcellular location is the virion. Its function is as follows. VP5 protein is one of the two proteins (with VP2) which constitute the virus particle outer capsid. Acts as a membrane permeabilization protein that mediates release of viral particles from endosomal compartments into the cytoplasm. Permeabilization activity is probably negatively regulated by VP2 and is triggered by endosomal degradation of VP2 and exposure to low pH. The chain is Outer capsid protein VP5 (Segment-6) from African horse sickness virus 6 (AHSV-6).